Reading from the N-terminus, the 123-residue chain is N(4)-acetylcytidine amidohydrolase (123 aa).

An ASCH domain is found at 6-101; it reads ITFYQRFEAD…EIIFWVIQFS (96 aa). Residue K21 is the Proton acceptor of the active site. S24 acts as the Nucleophile in catalysis. The active-site Proton donor is E74.

The protein belongs to the N(4)-acetylcytidine amidohydrolase family.

It carries out the reaction N(4)-acetylcytidine + H2O = cytidine + acetate + H(+). The catalysed reaction is N(4)-acetyl-2'-deoxycytidine + H2O = 2'-deoxycytidine + acetate + H(+). The enzyme catalyses N(4)-acetylcytosine + H2O = cytosine + acetate + H(+). Functionally, catalyzes the hydrolysis of N(4)-acetylcytidine (ac4C). The sequence is that of N(4)-acetylcytidine amidohydrolase from Haemophilus influenzae (strain ATCC 51907 / DSM 11121 / KW20 / Rd).